The following is a 201-amino-acid chain: Large ribosomal subunit protein uL4 (201 aa).

The interval 43–69 is disordered; it reads TKAQKTRSEVAGGGKKPWRQKGTGRAR.

The protein belongs to the universal ribosomal protein uL4 family. As to quaternary structure, part of the 50S ribosomal subunit.

In terms of biological role, one of the primary rRNA binding proteins, this protein initially binds near the 5'-end of the 23S rRNA. It is important during the early stages of 50S assembly. It makes multiple contacts with different domains of the 23S rRNA in the assembled 50S subunit and ribosome. Its function is as follows. Forms part of the polypeptide exit tunnel. This is Large ribosomal subunit protein uL4 from Idiomarina loihiensis (strain ATCC BAA-735 / DSM 15497 / L2-TR).